The following is a 136-amino-acid chain: Acidic phospholipase A2 EC-I (136 aa).

Residues 1–16 form the signal peptide; the sequence is MKTLWIVAVWLIAVEG. 7 disulfide bridges follow: Cys-42–Cys-129, Cys-44–Cys-60, Cys-59–Cys-111, Cys-65–Cys-136, Cys-66–Cys-104, Cys-73–Cys-97, and Cys-91–Cys-102. Residues Tyr-43, Gly-45, and Gly-47 each contribute to the Ca(2+) site. His-63 is a catalytic residue. Asp-64 provides a ligand contact to Ca(2+). The active site involves Asp-105. The may be responsible for inhibition of the platelet-aggregation activity stretch occupies residues 112–133; that stretch reads LGENVNTYDKKYKSYEDCTEEV.

The protein belongs to the phospholipase A2 family. Group II subfamily. D49 sub-subfamily. In terms of assembly, monomer. It depends on Ca(2+) as a cofactor. Expressed by the venom gland.

It localises to the secreted. It catalyses the reaction a 1,2-diacyl-sn-glycero-3-phosphocholine + H2O = a 1-acyl-sn-glycero-3-phosphocholine + a fatty acid + H(+). Its function is as follows. Snake venom phospholipase A2 (PLA2) that inhibits human platelet aggregation induced by ADP, collagen and epinephrin (possibly by binding the platelet receptor alpha-IIb/beta-III) and induces mild edema in the foot pads of mice. PLA2 catalyzes the calcium-dependent hydrolysis of the 2-acyl groups in 3-sn-phosphoglycerides. This chain is Acidic phospholipase A2 EC-I, found in Echis carinatus (Saw-scaled viper).